A 540-amino-acid chain; its full sequence is V-set and immunoglobulin domain-containing protein 10 (540 aa).

Residues 1-30 (MAAGGSAPEPRVLVCLGALLAGWVAVGLEA) form the signal peptide. 4 Ig-like C2-type domains span residues 31-119 (VVIG…WLQV), 123-215 (PYQI…RKVT), 223-309 (PPPS…VQIR), and 311-404 (PSLL…IWLS). The Extracellular portion of the chain corresponds to 31 to 413 (VVIGEVHENV…SVKEPLNIGG (383 aa)). N-linked (GlcNAc...) asparagine glycosylation is found at N39, N46, N70, N108, N138, N171, N180, and N198. C44 and C103 are oxidised to a cystine. Cystine bridges form between C153/C201 and C245/C290. The N-linked (GlcNAc...) asparagine glycan is linked to N326. C331 and C388 are oxidised to a cystine. A helical transmembrane segment spans residues 414 to 434 (IVGTIVSLLLLGLAIISGLLL). At 435–540 (HYSPVFCWKV…DIVQEEDRPV (106 aa)) the chain is on the cytoplasmic side. A compositionally biased stretch (acidic residues) spans 461-477 (DSEEEEEEEEEEEEDAA). 2 disordered regions span residues 461–500 (DSEE…QDHI) and 513–540 (QMGN…DRPV). Positions 482–500 (EGAREREELPKEIPKQDHI) are enriched in basic and acidic residues. Over residues 521 to 534 (LQDDSSEEQSDIVQ) the composition is skewed to acidic residues.

It is found in the membrane. The polypeptide is V-set and immunoglobulin domain-containing protein 10 (VSIG10) (Homo sapiens (Human)).